Consider the following 239-residue polypeptide: Probable septum site-determining protein MinC (239 aa).

Belongs to the MinC family. Interacts with MinD and FtsZ.

Functionally, cell division inhibitor that blocks the formation of polar Z ring septums. Rapidly oscillates between the poles of the cell to destabilize FtsZ filaments that have formed before they mature into polar Z rings. Prevents FtsZ polymerization. This Colwellia psychrerythraea (strain 34H / ATCC BAA-681) (Vibrio psychroerythus) protein is Probable septum site-determining protein MinC.